The primary structure comprises 504 residues: MPETKSSVSTLEQPETKPKKVGFVSLGCPKNLVDSEVMMGLLATNGAEITARAEDADIIVVNTCSFIDTAKQESVDTILEMAGHKATGRAQKLIVAGCLVERYRNEIQKNIPEVDAVVGTGELEAILAASGIEPRKSEANSPFVILNSTSASQQLKSGIADRPEGAAREEAGRFARTDWDGAVADLPNYLYDENTPRVLATPKYMAYIKVAEGCDHPCSFCIIPQLRGKFRSRRFESVVAEAERLAKQGVKEITLIGQDTTCYGEDLGLKDGLAQLLERLAQIEELQWVRFLYAYPNKITKRLLQTIADNPKIPKYMDVPLQHSAANVLKRMKRGAHGDIFLKSIEEMRRVIPDLTLRTSFIVGFPGETEEDFNQLCEFVKAAQIDWLGVFSYSDEEGAKAFALDEKVPPREIERRRKKLMSLQKQISKKKRKALIGREFDVILEGPSEETDLLWEGRTAMHAPEIDGKVYINDFAEHENVEPGQVFRCEITEAHDYDLVARLL.

In terms of domain architecture, MTTase N-terminal spans 19–135; it reads KKVGFVSLGC…ILAASGIEPR (117 aa). Residues C28, C64, C98, C214, C218, and C221 each contribute to the [4Fe-4S] cluster site. Positions 200-430 constitute a Radical SAM core domain; sequence ATPKYMAYIK…MSLQKQISKK (231 aa). Positions 433-504 constitute a TRAM domain; that stretch reads KALIGREFDV…HDYDLVARLL (72 aa).

Belongs to the methylthiotransferase family. RimO subfamily. Requires [4Fe-4S] cluster as cofactor.

The protein localises to the cytoplasm. It carries out the reaction L-aspartate(89)-[ribosomal protein uS12]-hydrogen + (sulfur carrier)-SH + AH2 + 2 S-adenosyl-L-methionine = 3-methylsulfanyl-L-aspartate(89)-[ribosomal protein uS12]-hydrogen + (sulfur carrier)-H + 5'-deoxyadenosine + L-methionine + A + S-adenosyl-L-homocysteine + 2 H(+). Catalyzes the methylthiolation of an aspartic acid residue of ribosomal protein uS12. The chain is Ribosomal protein uS12 methylthiotransferase RimO from Koribacter versatilis (strain Ellin345).